A 286-amino-acid chain; its full sequence is Eukaryotic translation initiation factor 3 subunit J (286 aa).

3 disordered regions span residues 1–35 (MSWD…DSWD), 141–162 (AASG…HPLF), and 229–258 (KAER…AVKT). Positions 21 to 35 (WEEEGNDEPLLDSWD) are enriched in acidic residues. Residues 35 to 75 (DIDEEEVARKKKEEEAKKKAEKEALKKKQEESKAKKLSKNK) adopt a coiled-coil conformation.

The protein belongs to the eIF-3 subunit J family. Component of the eukaryotic translation initiation factor 3 (eIF-3) complex.

The protein resides in the cytoplasm. Functionally, component of the eukaryotic translation initiation factor 3 (eIF-3) complex, which is involved in protein synthesis of a specialized repertoire of mRNAs and, together with other initiation factors, stimulates binding of mRNA and methionyl-tRNAi to the 40S ribosome. The eIF-3 complex specifically targets and initiates translation of a subset of mRNAs involved in cell proliferation. This chain is Eukaryotic translation initiation factor 3 subunit J, found in Debaryomyces hansenii (strain ATCC 36239 / CBS 767 / BCRC 21394 / JCM 1990 / NBRC 0083 / IGC 2968) (Yeast).